A 158-amino-acid chain; its full sequence is Glycine/sarcosine/betaine reductase complex component A1 (158 aa).

Sec-46 is a catalytic residue. Position 46 (Sec-46) is a non-standard amino acid, selenocysteine.

The protein belongs to the GrdA family. Monomer. Component of the glycine, sarcosine and betaine reductase complexes, together with components B and C.

The catalysed reaction is acetyl phosphate + [thioredoxin]-disulfide + NH4(+) + H2O = [thioredoxin]-dithiol + glycine + phosphate + H(+). It catalyses the reaction acetyl phosphate + methylamine + [thioredoxin]-disulfide + H2O = sarcosine + [thioredoxin]-dithiol + phosphate + H(+). It carries out the reaction acetyl phosphate + trimethylamine + [thioredoxin]-disulfide + H2O = glycine betaine + [thioredoxin]-dithiol + phosphate + H(+). Functionally, in the first step of glycine, betaine and sarcosine reductases, the substrate is bound to component PB via a Schiff base intermediate. Then the PB-activated substrate is nucleophilically attacked by the selenol anion of component PA to transform it to a carboxymethylated selenoether and the respective amine. By action of component PC, acetyl phosphate is formed, leaving component PA in its oxidized state. Finally component PA becomes reduced by the thioredoxin system to start a new catalytic cycle of reductive deamination. The sequence is that of Glycine/sarcosine/betaine reductase complex component A1 (grdA1) from Photobacterium profundum (strain SS9).